A 200-amino-acid polypeptide reads, in one-letter code: Probable molybdenum cofactor guanylyltransferase (200 aa).

GTP-binding positions include 9-11 (LAG), Lys-21, Asp-69, and Asp-100. Asp-100 provides a ligand contact to Mg(2+).

It belongs to the MobA family. The cofactor is Mg(2+).

Its subcellular location is the cytoplasm. The enzyme catalyses Mo-molybdopterin + GTP + H(+) = Mo-molybdopterin guanine dinucleotide + diphosphate. In terms of biological role, transfers a GMP moiety from GTP to Mo-molybdopterin (Mo-MPT) cofactor (Moco or molybdenum cofactor) to form Mo-molybdopterin guanine dinucleotide (Mo-MGD) cofactor. This is Probable molybdenum cofactor guanylyltransferase from Bacillus cereus (strain ATCC 10987 / NRS 248).